The following is a 291-amino-acid chain: ATP phosphoribosyltransferase (291 aa).

Belongs to the ATP phosphoribosyltransferase family. Long subfamily. Requires Mg(2+) as cofactor.

The protein resides in the cytoplasm. The enzyme catalyses 1-(5-phospho-beta-D-ribosyl)-ATP + diphosphate = 5-phospho-alpha-D-ribose 1-diphosphate + ATP. It participates in amino-acid biosynthesis; L-histidine biosynthesis; L-histidine from 5-phospho-alpha-D-ribose 1-diphosphate: step 1/9. Its activity is regulated as follows. Feedback inhibited by histidine. In terms of biological role, catalyzes the condensation of ATP and 5-phosphoribose 1-diphosphate to form N'-(5'-phosphoribosyl)-ATP (PR-ATP). Has a crucial role in the pathway because the rate of histidine biosynthesis seems to be controlled primarily by regulation of HisG enzymatic activity. The chain is ATP phosphoribosyltransferase from Desulfosudis oleivorans (strain DSM 6200 / JCM 39069 / Hxd3) (Desulfococcus oleovorans).